A 397-amino-acid polypeptide reads, in one-letter code: Probable sugar efflux transporter (397 aa).

The next 12 helical transmembrane spans lie at 15 to 35 (VIVMAFAAFVFNTTEFVPVAL), 51 to 71 (GLMITIYAWIVSLCSLPCMLM), 80 to 100 (LLISLFILFIASHILSAFAWN), 103 to 123 (VLLIARAGVALTHSIFWSITA), 137 to 157 (QALGLLALGSSLAMVLGLPLG), 169 to 189 (TFTLIGVFAALILILIVRLLP), 209 to 229 (PMLITLYIFTILVISAHFTAY), 246 to 266 (KATAVLLIFGVSGVVASVLFS), 277 to 297 (LLSSVAILTLALICLYGVSGI), 299 to 319 (GAIFALVFIWGVAISALSLAM), 333 to 353 (VATAIYSGIYNIGIGGGALIG), and 365 to 385 (IGYVGAVLGAVSIIWFILMFL).

The protein belongs to the major facilitator superfamily. SotB (TC 2.A.1.2) family.

The protein resides in the cell inner membrane. Its function is as follows. Involved in the efflux of sugars. The physiological role may be the reduction of the intracellular concentration of toxic sugars or sugar metabolites. In Mannheimia succiniciproducens (strain KCTC 0769BP / MBEL55E), this protein is Probable sugar efflux transporter.